The sequence spans 153 residues: Large ribosomal subunit protein uL23m (153 aa).

Positions Ile-110–Leu-153 are disordered. Basic and acidic residues predominate over residues Phe-111 to Gly-146.

This sequence belongs to the universal ribosomal protein uL23 family. In terms of assembly, component of the mitochondrial ribosome large subunit (39S) which comprises a 16S rRNA and about 50 distinct proteins.

It localises to the mitochondrion. The chain is Large ribosomal subunit protein uL23m (mrpl23) from Danio rerio (Zebrafish).